We begin with the raw amino-acid sequence, 262 residues long: MLELLPTAVEGVSQAQITGRPEWIWLALGTALMGLGTLYFLVKGMGVSDPDAKKFYAITTLVPAIAFTMYLSMLLGYGLTMVPFGGEQNPIYWARYADWLFTTPLLLLDLALLVDADQGTILALVGADGIMIGTGLVGALTKVYSYRFVWWAISTAAMLYILYVLFFGFTSKAESMRPEVASTFKVLRNVTVVLWSAYPVVWLIGSEGAGIVPLNIETLLFMVLDVSAKVGFGLILLRSRAIFGEAEAPEPSAGDGAAATSD.

The propeptide occupies 1–13 (MLELLPTAVEGVS). Gln14 bears the Pyrrolidone carboxylic acid mark. The Extracellular segment spans residues 14-22 (QAQITGRPE). A helical transmembrane segment spans residues 23 to 42 (WIWLALGTALMGLGTLYFLV). Topologically, residues 43 to 56 (KGMGVSDPDAKKFY) are cytoplasmic. The chain crosses the membrane as a helical span at residues 57–75 (AITTLVPAIAFTMYLSMLL). Over 76–92 (GYGLTMVPFGGEQNPIY) the chain is Extracellular. The chain crosses the membrane as a helical span at residues 93–109 (WARYADWLFTTPLLLLD). Over 110-120 (LALLVDADQGT) the chain is Cytoplasmic. The helical transmembrane segment at 121-140 (ILALVGADGIMIGTGLVGAL) threads the bilayer. The Extracellular segment spans residues 141 to 147 (TKVYSYR). Residues 148 to 167 (FVWWAISTAAMLYILYVLFF) form a helical membrane-spanning segment. Residues 168–185 (GFTSKAESMRPEVASTFK) lie on the Cytoplasmic side of the membrane. A helical membrane pass occupies residues 186–204 (VLRNVTVVLWSAYPVVWLI). Topologically, residues 205 to 216 (GSEGAGIVPLNI) are extracellular. A helical membrane pass occupies residues 217 to 236 (ETLLFMVLDVSAKVGFGLIL). Lys229 carries the post-translational modification N6-(retinylidene)lysine. The Cytoplasmic portion of the chain corresponds to 237 to 262 (LRSRAIFGEAEAPEPSAGDGAAATSD).

In terms of assembly, homotrimer. Post-translationally, the covalent binding of retinal to the apoprotein, bacterioopsin, generates bacteriorhodopsin.

Its subcellular location is the cell membrane. In terms of biological role, light-driven proton pump. This Halobacterium salinarum (strain ATCC 700922 / JCM 11081 / NRC-1) (Halobacterium halobium) protein is Bacteriorhodopsin (bop).